The chain runs to 443 residues: Chromosome partition protein MukF (443 aa).

The segment at 209-237 (LDETSGNLRELQDTLNAAGDKLQAQLLRI) is leucine-zipper.

Belongs to the MukF family. In terms of assembly, interacts, and probably forms a ternary complex, with MukE and MukB via its C-terminal region. The complex formation is stimulated by calcium or magnesium. It is required for an interaction between MukE and MukB.

It is found in the cytoplasm. The protein resides in the nucleoid. Its function is as follows. Involved in chromosome condensation, segregation and cell cycle progression. May participate in facilitating chromosome segregation by condensation DNA from both sides of a centrally located replisome during cell division. Not required for mini-F plasmid partitioning. Probably acts via its interaction with MukB and MukE. Overexpression results in anucleate cells. It has a calcium binding activity. This Actinobacillus pleuropneumoniae serotype 5b (strain L20) protein is Chromosome partition protein MukF.